Here is a 401-residue protein sequence, read N- to C-terminus: Canavanine gamma-lyase (401 aa).

Lys-214 bears the N6-(pyridoxal phosphate)lysine mark.

It belongs to the trans-sulfuration enzymes family. Requires pyridoxal 5'-phosphate as cofactor.

The catalysed reaction is L-canavanine + H2O = N-hydroxyguanidine + L-homoserine. Lyase involved in the degradation of canavanine, the delta-oxa-analog of arginine, allowing growth on canavanine as sole nitrogen and carbon source. Catalyzes the elimination of hydroxyguanidine from canavanine with a subsequent water addition to yield homoserine. The polypeptide is Canavanine gamma-lyase (Rhizobium leguminosarum bv. trifolii (strain WSM2304)).